Consider the following 445-residue polypeptide: tRNA-2-methylthio-N(6)-dimethylallyladenosine synthase (445 aa).

One can recognise an MTTase N-terminal domain in the interval 3 to 124 (KKLYIKTYGC…LPELISKVVR (122 aa)). 6 residues coordinate [4Fe-4S] cluster: cysteine 12, cysteine 48, cysteine 87, cysteine 162, cysteine 166, and cysteine 169. The 233-residue stretch at 148–380 (YTQGASSFIS…QKELATQQLA (233 aa)) folds into the Radical SAM core domain. Positions 383–445 (ESCVGSTMKV…ALNSLTGEIL (63 aa)) constitute a TRAM domain.

The protein belongs to the methylthiotransferase family. MiaB subfamily. Monomer. Requires [4Fe-4S] cluster as cofactor.

The protein localises to the cytoplasm. The catalysed reaction is N(6)-dimethylallyladenosine(37) in tRNA + (sulfur carrier)-SH + AH2 + 2 S-adenosyl-L-methionine = 2-methylsulfanyl-N(6)-dimethylallyladenosine(37) in tRNA + (sulfur carrier)-H + 5'-deoxyadenosine + L-methionine + A + S-adenosyl-L-homocysteine + 2 H(+). Functionally, catalyzes the methylthiolation of N6-(dimethylallyl)adenosine (i(6)A), leading to the formation of 2-methylthio-N6-(dimethylallyl)adenosine (ms(2)i(6)A) at position 37 in tRNAs that read codons beginning with uridine. The sequence is that of tRNA-2-methylthio-N(6)-dimethylallyladenosine synthase from Rickettsia typhi (strain ATCC VR-144 / Wilmington).